Here is a 709-residue protein sequence, read N- to C-terminus: Elongation factor G (709 aa).

The tr-type G domain occupies N10 to L286. Residues A19–T26, D83–H87, and N137–D140 each bind GTP.

It belongs to the TRAFAC class translation factor GTPase superfamily. Classic translation factor GTPase family. EF-G/EF-2 subfamily.

Its subcellular location is the cytoplasm. Its function is as follows. Catalyzes the GTP-dependent ribosomal translocation step during translation elongation. During this step, the ribosome changes from the pre-translocational (PRE) to the post-translocational (POST) state as the newly formed A-site-bound peptidyl-tRNA and P-site-bound deacylated tRNA move to the P and E sites, respectively. Catalyzes the coordinated movement of the two tRNA molecules, the mRNA and conformational changes in the ribosome. This is Elongation factor G from Corynebacterium glutamicum (strain R).